A 492-amino-acid chain; its full sequence is GPI alpha-1,6-mannosyltransferase 2 (492 aa).

Topologically, residues 1-13 (MGLLDPSQKEVLK) are cytoplasmic. The helical transmembrane segment at 14 to 34 (FAVSCRILTLVLQALFNIIIP) threads the bilayer. At 35–77 (DHHADAFSPPRLAPSGSVDQLVEALLGGLSRWDAEHFLFIAEH) the chain is on the lumenal side. A helical membrane pass occupies residues 78-98 (GYLYEHNFAFFPGFPLALLMG). Over 99-113 (TELLRPLQGLLSERS) the chain is Cytoplasmic. Residues 114-134 (CLLVSVALLNSLFSVLAAVAL) traverse the membrane as a helical segment. Over 135–136 (HD) the chain is Lumenal. Residues 137-157 (LGCLVLHCPRQAFCAALLFCL) form a helical membrane-spanning segment. The Cytoplasmic segment spans residues 158-161 (SPAN). The helical transmembrane segment at 162–182 (VFLAAGYSEALFAFLTFSAMG) threads the bilayer. The Lumenal segment spans residues 183 to 192 (QLERGRGWAS). The chain crosses the membrane as a helical span at residues 193 to 213 (GLLFALAAGVRSNGLVSVGFL). Residues 214–234 (LHSQCRGFCSSLVVLDPLKGL) lie on the Cytoplasmic side of the membrane. The chain crosses the membrane as a helical span at residues 235–255 (VKLMASLCLSVLTVSLPFALF). Residues 256-327 (QYYAYTQFCF…RYYELRQVPN (72 aa)) lie on the Lumenal side of the membrane. A helical transmembrane segment spans residues 328–348 (FLLATPVTVLVVWATWTYVTA). The Cytoplasmic portion of the chain corresponds to 349-378 (HPWLCLTLGLQRTKDRESLEKPHPGFLSAK). Residues 379 to 399 (VFVYLVHAAALLAFGGLCMHV) form a helical membrane-spanning segment. The Lumenal portion of the chain corresponds to 400–468 (QVLTRLLGSS…NWKTCSPVTK (69 aa)). A helical transmembrane segment spans residues 469–489 (CILVYFLTYWLLGLIMHCNFL). Residues 490 to 492 (PWT) are Cytoplasmic-facing.

It belongs to the PIGV family. In terms of processing, not N-glycosylated.

Its subcellular location is the endoplasmic reticulum membrane. It functions in the pathway glycolipid biosynthesis; glycosylphosphatidylinositol-anchor biosynthesis. Functionally, alpha-1,6-mannosyltransferase that catalyzes the transfer of the second mannose, via an alpha-1,6 bond, from a dolichol-phosphate-mannose (Dol-P-Man) to the alpha-D-Man-(1-&gt;4)-alpha-D-GlcN-(1-&gt;6)-(1-radyl,2-acyl-sn-glycero-3-phospho)-2-acyl-inositol (also termed H2) intermediate to generate an alpha-D-Man-(1-&gt;6)-alpha-D-Man-(1-&gt;4)-alpha-D-GlcN-(1-&gt;6)-(1-radyl,2-acyl-sn-glycero-3-phospho)-2-acyl-inositol (also termed H3) and participates in the seventh step of the glycosylphosphatidylinositol-anchor biosynthesis. Also transfers the second mannose on a 2-PEtn-alpha-D-Man-(1-&gt;4)-alpha-D-GlcN-(1-&gt;6)-(1-radyl,2-acyl-sn-glycero-3-phospho)-2-acyl-inositol (also termed H5). This Rattus norvegicus (Rat) protein is GPI alpha-1,6-mannosyltransferase 2.